Consider the following 240-residue polypeptide: Ribonuclease PH (240 aa).

Phosphate-binding positions include arginine 87 and 125 to 127; that span reads GTR.

Belongs to the RNase PH family. In terms of assembly, homohexameric ring arranged as a trimer of dimers.

The catalysed reaction is tRNA(n+1) + phosphate = tRNA(n) + a ribonucleoside 5'-diphosphate. Its function is as follows. Phosphorolytic 3'-5' exoribonuclease that plays an important role in tRNA 3'-end maturation. Removes nucleotide residues following the 3'-CCA terminus of tRNAs; can also add nucleotides to the ends of RNA molecules by using nucleoside diphosphates as substrates, but this may not be physiologically important. Probably plays a role in initiation of 16S rRNA degradation (leading to ribosome degradation) during starvation. In Dictyoglomus turgidum (strain DSM 6724 / Z-1310), this protein is Ribonuclease PH.